Consider the following 162-residue polypeptide: Large ribosomal subunit protein uL30 (162 aa).

It belongs to the universal ribosomal protein uL30 family. In terms of assembly, part of the 50S ribosomal subunit.

The sequence is that of Large ribosomal subunit protein uL30 from Korarchaeum cryptofilum (strain OPF8).